The following is a 429-amino-acid chain: Adenylosuccinate synthetase (429 aa).

GTP is bound by residues 12 to 18 and 40 to 42; these read GDEGKGK and GHT. Asp13 serves as the catalytic Proton acceptor. Mg(2+)-binding residues include Asp13 and Gly40. IMP contacts are provided by residues 13–16, 38–41, Thr128, Arg142, Gln223, Thr238, and Arg302; these read DEGK and NAGH. The active-site Proton donor is His41. 298 to 304 contributes to the substrate binding site; it reads TTTGRPR. GTP-binding positions include Arg304, 330 to 332, and 412 to 414; these read SID and SVG.

It belongs to the adenylosuccinate synthetase family. In terms of assembly, homodimer. It depends on Mg(2+) as a cofactor.

The protein localises to the cytoplasm. It carries out the reaction IMP + L-aspartate + GTP = N(6)-(1,2-dicarboxyethyl)-AMP + GDP + phosphate + 2 H(+). It participates in purine metabolism; AMP biosynthesis via de novo pathway; AMP from IMP: step 1/2. Plays an important role in the de novo pathway of purine nucleotide biosynthesis. Catalyzes the first committed step in the biosynthesis of AMP from IMP. In Bacillus cereus (strain ATCC 10987 / NRS 248), this protein is Adenylosuccinate synthetase.